The following is a 370-amino-acid chain: MILKRISILNYKNLEQVELNFSAKLNCFFGQNGMGKTNLLDAVYFLSFCKSAGNPIDSQNIRHEQDFFVIQGFYEAMDGTPEEIYCGMKRRSKKQFKRNKKEYSRLSDHIGFIPLVMVSPADSELIAGGSDERRRFMDVVISQYDKEYLDALIRYNKALVQRNTLLKSEQPIEEELFLVWEEMMAQAGEVVFRKREAFISEFIPIFQSFYSYISQDKEQVGLTYESHARKASLLEVLKESRVRDKIMGYSLRGIHKDELNMLLGDFPIKREGSQGQNKTYLVALKLAQFDFLKRTGSTVPLLLLDDIFDKLDASRVEQIVKLVAGDNFGQIFITDTNREHLDRILYKVGSDYKMFRVESGAINEMEEKER.

Position 30 to 37 (30 to 37 (GQNGMGKT)) interacts with ATP.

This sequence belongs to the RecF family.

It is found in the cytoplasm. Functionally, the RecF protein is involved in DNA metabolism; it is required for DNA replication and normal SOS inducibility. RecF binds preferentially to single-stranded, linear DNA. It also seems to bind ATP. The protein is DNA replication and repair protein RecF of Bacteroides fragilis (strain ATCC 25285 / DSM 2151 / CCUG 4856 / JCM 11019 / LMG 10263 / NCTC 9343 / Onslow / VPI 2553 / EN-2).